The sequence spans 175 residues: Transcription factor E (175 aa).

An HTH TFE/IIEalpha-type domain is found at 3-88 (ENPLIQQVLF…TWKPSLEKVP (86 aa)).

This sequence belongs to the TFE family. As to quaternary structure, monomer. Interaction with RNA polymerase subunits RpoF and RpoE is necessary for Tfe stimulatory transcription activity. Able to interact with Tbp and RNA polymerase in the absence of DNA promoter. Interacts both with the preinitiation and elongation complexes.

Its function is as follows. Transcription factor that plays a role in the activation of archaeal genes transcribed by RNA polymerase. Facilitates transcription initiation by enhancing TATA-box recognition by TATA-box-binding protein (Tbp), and transcription factor B (Tfb) and RNA polymerase recruitment. Not absolutely required for transcription in vitro, but particularly important in cases where Tbp or Tfb function is not optimal. It dynamically alters the nucleic acid-binding properties of RNA polymerases by stabilizing the initiation complex and destabilizing elongation complexes. Seems to translocate with the RNA polymerase following initiation and acts by binding to the non template strand of the transcription bubble in elongation complexes. This Methanococcus maripaludis (strain C7 / ATCC BAA-1331) protein is Transcription factor E.